The chain runs to 326 residues: Putative nickel insertion protein (326 aa).

Belongs to the LarC family.

In Enterococcus faecalis (strain ATCC 700802 / V583), this protein is Putative nickel insertion protein.